Reading from the N-terminus, the 265-residue chain is Diphthine synthase (265 aa).

Residues Leu-10, Asp-87, Val-90, Ser-115–Ile-116, Leu-166, Ala-209, and His-234 each bind S-adenosyl-L-methionine.

Belongs to the diphthine synthase family. As to quaternary structure, homodimer.

It carries out the reaction 2-[(3S)-amino-3-carboxypropyl]-L-histidyl-[translation elongation factor 2] + 3 S-adenosyl-L-methionine = diphthine-[translation elongation factor 2] + 3 S-adenosyl-L-homocysteine + 3 H(+). The protein operates within protein modification; peptidyl-diphthamide biosynthesis. Functionally, S-adenosyl-L-methionine-dependent methyltransferase that catalyzes the trimethylation of the amino group of the modified target histidine residue in translation elongation factor 2 (EF-2), to form an intermediate called diphthine. The three successive methylation reactions represent the second step of diphthamide biosynthesis. The polypeptide is Diphthine synthase (Pyrococcus horikoshii (strain ATCC 700860 / DSM 12428 / JCM 9974 / NBRC 100139 / OT-3)).